The chain runs to 116 residues: Ribonuclease P protein component (116 aa).

It belongs to the RnpA family. In terms of assembly, consists of a catalytic RNA component (M1 or rnpB) and a protein subunit.

It catalyses the reaction Endonucleolytic cleavage of RNA, removing 5'-extranucleotides from tRNA precursor.. Its function is as follows. RNaseP catalyzes the removal of the 5'-leader sequence from pre-tRNA to produce the mature 5'-terminus. It can also cleave other RNA substrates such as 4.5S RNA. The protein component plays an auxiliary but essential role in vivo by binding to the 5'-leader sequence and broadening the substrate specificity of the ribozyme. This is Ribonuclease P protein component from Acholeplasma laidlawii (strain PG-8A).